Here is a 119-residue protein sequence, read N- to C-terminus: Holo-[acyl-carrier-protein] synthase (119 aa).

Residues aspartate 8 and glutamate 58 each contribute to the Mg(2+) site.

Belongs to the P-Pant transferase superfamily. AcpS family. The cofactor is Mg(2+).

Its subcellular location is the cytoplasm. It catalyses the reaction apo-[ACP] + CoA = holo-[ACP] + adenosine 3',5'-bisphosphate + H(+). Its function is as follows. Transfers the 4'-phosphopantetheine moiety from coenzyme A to a Ser of acyl-carrier-protein. This Halalkalibacterium halodurans (strain ATCC BAA-125 / DSM 18197 / FERM 7344 / JCM 9153 / C-125) (Bacillus halodurans) protein is Holo-[acyl-carrier-protein] synthase.